The primary structure comprises 374 residues: UDP-N-acetylglucosamine--N-acetylmuramyl-(pentapeptide) pyrophosphoryl-undecaprenol N-acetylglucosamine transferase (374 aa).

UDP-N-acetyl-alpha-D-glucosamine is bound by residues 13–15 (TGG), N124, R165, S193, and Q294.

The protein belongs to the glycosyltransferase 28 family. MurG subfamily.

The protein localises to the cell inner membrane. It carries out the reaction di-trans,octa-cis-undecaprenyl diphospho-N-acetyl-alpha-D-muramoyl-L-alanyl-D-glutamyl-meso-2,6-diaminopimeloyl-D-alanyl-D-alanine + UDP-N-acetyl-alpha-D-glucosamine = di-trans,octa-cis-undecaprenyl diphospho-[N-acetyl-alpha-D-glucosaminyl-(1-&gt;4)]-N-acetyl-alpha-D-muramoyl-L-alanyl-D-glutamyl-meso-2,6-diaminopimeloyl-D-alanyl-D-alanine + UDP + H(+). It functions in the pathway cell wall biogenesis; peptidoglycan biosynthesis. Functionally, cell wall formation. Catalyzes the transfer of a GlcNAc subunit on undecaprenyl-pyrophosphoryl-MurNAc-pentapeptide (lipid intermediate I) to form undecaprenyl-pyrophosphoryl-MurNAc-(pentapeptide)GlcNAc (lipid intermediate II). The protein is UDP-N-acetylglucosamine--N-acetylmuramyl-(pentapeptide) pyrophosphoryl-undecaprenol N-acetylglucosamine transferase of Rhizobium etli (strain ATCC 51251 / DSM 11541 / JCM 21823 / NBRC 15573 / CFN 42).